We begin with the raw amino-acid sequence, 438 residues long: UDP-N-acetylglucosamine 1-carboxyvinyltransferase 1 (438 aa).

22–23 (KN) is a phosphoenolpyruvate binding site. UDP-N-acetyl-alpha-D-glucosamine is bound at residue Arg95. Cys119 serves as the catalytic Proton donor. A 2-(S-cysteinyl)pyruvic acid O-phosphothioketal modification is found at Cys119. Residues 124–128 (RPIDL), Asp307, and Val329 contribute to the UDP-N-acetyl-alpha-D-glucosamine site.

The protein belongs to the EPSP synthase family. MurA subfamily.

It is found in the cytoplasm. The enzyme catalyses phosphoenolpyruvate + UDP-N-acetyl-alpha-D-glucosamine = UDP-N-acetyl-3-O-(1-carboxyvinyl)-alpha-D-glucosamine + phosphate. Its pathway is cell wall biogenesis; peptidoglycan biosynthesis. Cell wall formation. Adds enolpyruvyl to UDP-N-acetylglucosamine. The sequence is that of UDP-N-acetylglucosamine 1-carboxyvinyltransferase 1 from Lactiplantibacillus plantarum (strain ATCC BAA-793 / NCIMB 8826 / WCFS1) (Lactobacillus plantarum).